We begin with the raw amino-acid sequence, 164 residues long: R-phycoerythrin alpha chain (164 aa).

Asparagine 47, lysine 81, cysteine 82, arginine 84, histidine 88, arginine 137, cysteine 139, and arginine 142 together coordinate (2R,3E)-phycoerythrobilin.

This sequence belongs to the phycobiliprotein family. Heterododecamer of 6 alpha and 6 beta chains. The basic functional unit of phycobiliproteins is a ring-shaped hexamer formed from two back-to-back trimers contacting via the alpha chain subunits. The trimers are composed of alpha/beta subunit heterodimers arranged around a three-fold axis of symmetry. The phycoerythrins also contain a gamma subunit which is located in the center of the hexamer. In terms of processing, contains two covalently linked phycoerythrobilin chromophores.

It is found in the plastid. It localises to the chloroplast thylakoid membrane. In terms of biological role, light-harvesting photosynthetic tetrapyrrole chromophore-protein from the phycobiliprotein complex. This chain is R-phycoerythrin alpha chain (cpeA), found in Griffithsia monilis (Red alga).